We begin with the raw amino-acid sequence, 310 residues long: Peroxidase 44 (310 aa).

An N-terminal signal peptide occupies residues 1-20; it reads MRSITALFFLFCFLAPSALA. 4 cysteine pairs are disulfide-bonded: Cys-31–Cys-110, Cys-64–Cys-69, Cys-116–Cys-305, and Cys-194–Cys-218. His-62 serves as the catalytic Proton acceptor. Asp-63, Val-66, Gly-68, Asp-70, and Ser-72 together coordinate Ca(2+). A substrate-binding site is contributed by Pro-156. His-187 is a heme b binding site. Ser-188 contributes to the Ca(2+) binding site. 3 residues coordinate Ca(2+): Asp-229, Thr-232, and Asp-237.

The protein belongs to the peroxidase family. Classical plant (class III) peroxidase subfamily. Heme b is required as a cofactor. Requires Ca(2+) as cofactor.

The protein resides in the secreted. The enzyme catalyses 2 a phenolic donor + H2O2 = 2 a phenolic radical donor + 2 H2O. Functionally, removal of H(2)O(2), oxidation of toxic reductants, biosynthesis and degradation of lignin, suberization, auxin catabolism, response to environmental stresses such as wounding, pathogen attack and oxidative stress. These functions might be dependent on each isozyme/isoform in each plant tissue. The sequence is that of Peroxidase 44 (PER44) from Arabidopsis thaliana (Mouse-ear cress).